The chain runs to 377 residues: tRNA-specific 2-thiouridylase MnmA (377 aa).

Residues 8-15 (GMSGGVDS) and methionine 34 each bind ATP. The interval 94 to 96 (NPD) is interaction with target base in tRNA. Residue cysteine 99 is the Nucleophile of the active site. Cysteine 99 and cysteine 201 form a disulfide bridge. Glycine 123 is a binding site for ATP. An interaction with tRNA region spans residues 151–153 (KDQ). The active-site Cysteine persulfide intermediate is cysteine 201. Residues 315-316 (RY) are interaction with tRNA.

Belongs to the MnmA/TRMU family.

It is found in the cytoplasm. It catalyses the reaction S-sulfanyl-L-cysteinyl-[protein] + uridine(34) in tRNA + AH2 + ATP = 2-thiouridine(34) in tRNA + L-cysteinyl-[protein] + A + AMP + diphosphate + H(+). Its function is as follows. Catalyzes the 2-thiolation of uridine at the wobble position (U34) of tRNA, leading to the formation of s(2)U34. This is tRNA-specific 2-thiouridylase MnmA from Acinetobacter baumannii (strain ACICU).